Consider the following 413-residue polypeptide: Peptidase T (413 aa).

His-84 contributes to the Zn(2+) binding site. The active site involves Asp-86. Asp-146 contributes to the Zn(2+) binding site. Glu-180 acts as the Proton acceptor in catalysis. Positions 181, 203, and 385 each coordinate Zn(2+).

This sequence belongs to the peptidase M20B family. Zn(2+) is required as a cofactor.

The protein resides in the cytoplasm. The enzyme catalyses Release of the N-terminal residue from a tripeptide.. Its function is as follows. Cleaves the N-terminal amino acid of tripeptides. The sequence is that of Peptidase T from Limosilactobacillus fermentum (strain NBRC 3956 / LMG 18251) (Lactobacillus fermentum).